The sequence spans 95 residues: LLNAEDIKKAVGACAAAESFDHKKFFQMVGLKKKNREEVKMVFQILDKDKSGFIEEEELKFILKGFSADARDLSDTETKRMMAAGDKDGDGKIGA.

Ser-19 carries the phosphoserine modification. EF-hand domains are found at residues 34–69 (KNREEVKMVFQILDKDKSGFIEEEELKFILKGFSAD) and 73–95 (LSDTETKRMMAAGDKDGDGKIGA). Ca(2+) is bound by residues Asp-47, Asp-49, Ser-51, Phe-53, Glu-55, Glu-58, Asp-86, Asp-88, Asp-90, and Lys-92.

Belongs to the parvalbumin family.

Functionally, in muscle, parvalbumin is thought to be involved in relaxation after contraction. It binds two calcium ions. This is Parvalbumin alpha (PVALB) from Cavia porcellus (Guinea pig).